Reading from the N-terminus, the 262-residue chain is Polyamine aminopropyltransferase (262 aa).

Positions 1–249 (MWITQEITPY…DIHRAAFALP (249 aa)) constitute a PABS domain. An S-methyl-5'-thioadenosine-binding site is contributed by Asn29. Position 83 (Asp83) interacts with spermidine. Asp155 acts as the Proton acceptor in catalysis.

Belongs to the spermidine/spermine synthase family. In terms of assembly, homodimer or homotetramer.

It localises to the cytoplasm. It carries out the reaction S-adenosyl 3-(methylsulfanyl)propylamine + putrescine = S-methyl-5'-thioadenosine + spermidine + H(+). The protein operates within amine and polyamine biosynthesis; spermidine biosynthesis; spermidine from putrescine: step 1/1. Its function is as follows. Catalyzes the irreversible transfer of a propylamine group from the amino donor S-adenosylmethioninamine (decarboxy-AdoMet) to putrescine (1,4-diaminobutane) to yield spermidine. In Helicobacter pylori (strain G27), this protein is Polyamine aminopropyltransferase.